A 311-amino-acid polypeptide reads, in one-letter code: D-allose-binding periplasmic protein (311 aa).

An N-terminal signal peptide occupies residues 1–23 (MNKYLKYFSGTLVGLMLSTSAFA).

The protein belongs to the bacterial solute-binding protein 2 family.

Its subcellular location is the periplasm. Part of the binding-protein-dependent transport system AlsBAC for D-allose. The sequence is that of D-allose-binding periplasmic protein (alsB) from Escherichia coli (strain K12).